Consider the following 380-residue polypeptide: Endo-polygalacturonase (380 aa).

The signal sequence occupies residues 1 to 17 (MVHILSSALSLLRLGAA). The propeptide occupies 18 to 42 (VSAAPAPAPTAAPNVADALAAVEKR). Residues Cys46 and Cys64 are joined by a disulfide bond. 6 PbH1 repeats span residues 178–207 (ASGL…DVGS), 208–229 (STDI…AINS), 230–250 (GTGI…SIGS), 259–280 (VSDV…RIKT), 288–310 (VSGV…VIEQ), and 322–343 (TSGV…SSSA). The active-site Proton donor is Asp222. Cys224 and Cys240 form a disulfide bridge. The active site involves His244. A disulfide bridge connects residues Cys350 and Cys353. Residue Asn361 is glycosylated (N-linked (GlcNAc...) asparagine). Cys371 and Cys380 are joined by a disulfide.

It belongs to the glycosyl hydrolase 28 family.

Its subcellular location is the secreted. The catalysed reaction is (1,4-alpha-D-galacturonosyl)n+m + H2O = (1,4-alpha-D-galacturonosyl)n + (1,4-alpha-D-galacturonosyl)m.. The protein is Endo-polygalacturonase (PG1) of Sclerotinia sclerotiorum (White mold).